A 1370-amino-acid chain; its full sequence is MASARAASRGVYRYLCPNCGGPNSEERLSRGLPCPRCLPRLPRKGVSGWTGLARLLRREGTLGAGVKAMASLEEEARSLWRFFEKAVGSPPWGAQRTWAKRLARGDSFSIIAPTGVGKTTFGAAASLFYACKKGMRSYIVLPTTTLAANVARKLESMVESTGCGRVRLLVIHSKLKTSERREAMERFEKGDFDILVTTAAFARKYADRLSGYRFRLVFVDDVDAVLRSARSVDAILKIVGFDEEAIEKGLEVLRLQREQARLVGLLQSQREEVREEARKKLLEVKRRLERLEAEIEARRGRTASLIVSSATGRPRGARVRLFRVLLNFEAGGRGDIGLRRVIDSYTHPTDGVAEKVVELVRRLGTGGLVYVPIDMGVEYAERLAEELRRAGVKAEAYHAKKPLELLDRFAEGEIDVLVGVANYYGTLVRGLDLPARVRYAVFAGVPRHKFGSDIGDPHPSRLLRLLSILAESRIEEVASAARSHMGRLRRMLRVLSPAALQMIAERVARGEVEGGYDRQVLEAYQFLREALARDDVWESLRELDVGIVREGGRTYILVPDPATYLQASGRTSRLYAGGITLGLSVVVVDNEPVMRGLMKRVSWMAEVDWRRFEDLDLQSILREIDEDREKVRRVVKGLYRGVELVRTALLVVESPNKARTIARFFGQPSVRLLPGGGRVYEVATGDKILMIMASGGHVFDLVVRVDGRDLEAAGGEPEHAIFGVLRYRLGGNGAAAYTPVYTSIKRCLDCGYQFVDEASRCPRCGSELIRNSLSTVEDLRRVAWEADEVYVGTDPDTEGEKIGWDVALALRPYAPDIKRLEFHEVTKKAILEALSNPRSFDDNLVDAQVVRRVEDRWIGFTLSPLLWCDFWPRYCKRVLEEYGEKRPHMDRERCAKYKAYYNLSAGRVQTPTLGWVVDRTLAYRKKVWLYRVVHDSQLLFAVRSDDPEVPESVKRVLDNWVKHHKKTGIEPWLDVKAVVEKEEWTALPPPPPYTTDTMLRDANRLLGLGSAEAMRIAQDLFEWGLITYHRTDSTRVSDRGMQVAREWLETRFGGLAGQLYRPRRWGEGGAHEAIRPVRPIDVERLQLLVEEGVIELPGTLTRRHLRLYDLIFRRFMASQMREADALRVVYRLRVPELDGYTLTLERVVEIGRPGDAEGVTRGFTLVWPYVRPQPRLVEGREAWIRARVEGRQVPKAYPYTEGEIVEEMKTRGIGRPSTYAKIVETLFRRRYVIEVSREEGRGAGFVVATSRGINVYNYLTEELRSADEEEYGGRIAGILRRVPSLVSEDRTRELERQMDMVEKGDASRDDVLESVFNEISDLALLLNIEHPIKHRSRAEGNTQGNTWVSNFVACAVKSPEVSRVWGAGVG.

The segment at 6–47 (AASRGVYRYLCPNCGGPNSEERLSRGLPCPRCLPRLPRKGVS) adopts an RG N-terminal-type zinc-finger fold. Zn(2+)-binding residues include C16, C19, C34, and C37. Residues Q95 and 112 to 119 (APTGVGKT) contribute to the ATP site. In terms of domain architecture, Helicase ATP-binding spans 99 to 287 (AKRLARGDSF…RKKLLEVKRR (189 aa)). A DEAD box motif is present at residues 220 to 223 (DDVD). A topoisomerase I region spans residues 643 to 1370 (ELVRTALLVV…VSRVWGAGVG (728 aa)). One can recognise a Toprim domain in the interval 647–825 (TALLVVESPN…DIKRLEFHEV (179 aa)). E653 serves as a coordination point for Mg(2+). The RG C-terminal-type zinc finger occupies 744 to 772 (IKRCLDCGYQFVDEASRCPRCGSELIRNS). C747, C750, C761, and C764 together coordinate Zn(2+). Mg(2+) is bound at residue D794. The Topo IA-type catalytic domain occupies 841–1323 (DDNLVDAQVV…SVFNEISDLA (483 aa)). Y1028 serves as the catalytic O-(5'-phospho-DNA)-tyrosine intermediate.

It in the N-terminal section; belongs to the DEAD box helicase family. DDVD subfamily. In the C-terminal section; belongs to the type IA topoisomerase family. Monomer. It depends on Zn(2+) as a cofactor. Mg(2+) serves as cofactor.

It is found in the cytoplasm. It catalyses the reaction ATP + H2O = ADP + phosphate + H(+). Its function is as follows. Modifies the topological state of DNA by introducing positive supercoils in an ATP-dependent process, increasing the linking number in steps of +1. Binds to single-stranded DNA, transiently cleaves and then rejoins the ends, introducing a positive supercoil in the process. The scissile phosphodiester is attacked by the catalytic tyrosine of the enzyme, resulting in the formation of a DNA-(5'-phosphotyrosyl)-enzyme intermediate. Probably involved in rewinding DNA strands in regions of the chromosome that have opened up to allow replication, transcription, DNA repair and/or for DNA protection. This chain is Reverse gyrase 1, found in Aeropyrum pernix (strain ATCC 700893 / DSM 11879 / JCM 9820 / NBRC 100138 / K1).